A 328-amino-acid chain; its full sequence is Cell division protein ZipA (328 aa).

Topologically, residues 1-4 (MDLN) are periplasmic. The chain crosses the membrane as a helical span at residues 5–25 (TILIIVGIVALVALIVHGLWS). Over 26 to 328 (NRREKSKYFD…NAEQAYLARV (303 aa)) the chain is Cytoplasmic. Residues 44 to 82 (SLTSRSHTQEEMVQPNNISPNTYVENGHTPISQPTTEKL) form a disordered region. The segment covering 57–81 (QPNNISPNTYVENGHTPISQPTTEK) has biased composition (polar residues).

Belongs to the ZipA family. Interacts with FtsZ via their C-terminal domains.

It localises to the cell inner membrane. Essential cell division protein that stabilizes the FtsZ protofilaments by cross-linking them and that serves as a cytoplasmic membrane anchor for the Z ring. Also required for the recruitment to the septal ring of downstream cell division proteins. The polypeptide is Cell division protein ZipA (Haemophilus influenzae (strain PittGG)).